The primary structure comprises 667 residues: E3 ubiquitin-protein ligase RNF6 (667 aa).

7 disordered regions span residues 1-25 (MDPSRSRSGGSGEESSFQENERRWQ), 75-100 (KEQLASQPGSDSAASDGDSESLRAHS), 116-216 (GNVT…QGSF), 295-355 (FSSR…TPLS), 396-419 (ETRDRDSIANRTRSRAGLAESTVE), 507-532 (GDAADDSGQHGRASSQASQAQDGAEM), and 537-556 (EPAPPQARPSGSRSRRQLGR). A compositionally biased stretch (low complexity) spans 79–90 (ASQPGSDSAASD). Polar residues predominate over residues 116 to 139 (GNVTRSGQNGNQSWRAVSRTNPNS). A compositionally biased stretch (basic and acidic residues) spans 150 to 163 (INPDNRGSEMHGED). A compositionally biased stretch (low complexity) spans 191–200 (SQTSMSSSGP). Polar residues predominate over residues 296–327 (SSRSRSPIQRQNGTVHHNSQRQGRPVQQTGRN). Residues 516 to 530 (HGRASSQASQAQDGA) are compositionally biased toward low complexity. Residue serine 559 is modified to Phosphoserine. An RING-type; atypical zinc finger spans residues 614–655 (CSVCISDYVAGNKLRQLPCLHEFHIHCIDRWLSENCTCPVCR).

The protein belongs to the RNF12 family. Widely expressed with higher expression in the testis in both germ cells and Sertoli cells.

The protein localises to the nucleus. The protein resides in the cytoplasm. It is found in the cell projection. Its subcellular location is the axon. It localises to the PML body. It catalyses the reaction S-ubiquitinyl-[E2 ubiquitin-conjugating enzyme]-L-cysteine + [acceptor protein]-L-lysine = [E2 ubiquitin-conjugating enzyme]-L-cysteine + N(6)-ubiquitinyl-[acceptor protein]-L-lysine.. Its pathway is protein modification; protein ubiquitination. Functionally, E3 ubiquitin-protein ligase mediating 'Lys-48'-linked polyubiquitination of LIMK1 and its subsequent targeting to the proteasome for degradation. Negatively regulates axonal outgrowth through regulation of the LIMK1 turnover. Mediates 'Lys-6' and 'Lys-27'-linked polyubiquitination of AR/androgen receptor thereby modulating its transcriptional activity. May also bind DNA and function as a transcriptional regulator. Mediates polyubiquitination of QKI in macrophages, leading to its degradation. The sequence is that of E3 ubiquitin-protein ligase RNF6 from Mus musculus (Mouse).